A 301-amino-acid polypeptide reads, in one-letter code: N-acetylmuramic acid 6-phosphate etherase (301 aa).

In terms of domain architecture, SIS spans 59 to 222; that stretch reads TSEALMHGGR…STSVMVKLGK (164 aa). The active-site Proton donor is Glu-87. The active site involves Glu-118.

Belongs to the GCKR-like family. MurNAc-6-P etherase subfamily. As to quaternary structure, homodimer.

It carries out the reaction N-acetyl-D-muramate 6-phosphate + H2O = N-acetyl-D-glucosamine 6-phosphate + (R)-lactate. The protein operates within amino-sugar metabolism; N-acetylmuramate degradation. Functionally, specifically catalyzes the cleavage of the D-lactyl ether substituent of MurNAc 6-phosphate, producing GlcNAc 6-phosphate and D-lactate. This is N-acetylmuramic acid 6-phosphate etherase from Picosynechococcus sp. (strain ATCC 27264 / PCC 7002 / PR-6) (Agmenellum quadruplicatum).